A 111-amino-acid chain; its full sequence is MANHEVIFKWYLSLNFNNSSVDWSDKDYSLTFSFDRNTDRNNMLSDSGETQQQILLWNQYQPQFLVVRVNAEKSGVNVDLWLIDIVNKTFATNFEVGLNYEWSVRTIYVGE.

This is an uncharacterized protein from Ureaplasma parvum serovar 3 (strain ATCC 700970).